We begin with the raw amino-acid sequence, 414 residues long: uncharacterized protein (414 aa).

3 disordered regions span residues 136-168 (SSKS…TVPT), 297-333 (PQNF…ENAS), and 346-414 (ALNA…NGSK). The span at 350–359 (PSRSRPTHGS) shows a compositional bias: polar residues. The span at 399–414 (SKSEKIYPEPRRNGSK) shows a compositional bias: basic and acidic residues.

This is an uncharacterized protein from Homo sapiens (Human).